The chain runs to 1475 residues: Mediator of RNA polymerase II transcription subunit 1.1 (1475 aa).

Disordered stretches follow at residues 579 to 600 (STIG…LTSM), 645 to 894 (GLAS…KMRE), and 908 to 1475 (PDVE…IDDE). The segment covering 655–666 (PVAAAAAAPGGP) has biased composition (low complexity). The span at 755-766 (QRSSSEQHNPNP) shows a compositional bias: polar residues. A compositionally biased stretch (low complexity) spans 767–800 (HQMSQYQMQQYQQNQQFRMHQMQQQQQQQFQMQS). Over residues 810–819 (TDEDSDEECD) the composition is skewed to acidic residues. The span at 829-838 (STSSRMSSVP) shows a compositional bias: low complexity. Pro residues predominate over residues 869–880 (TPSPLSAPPKPF). Low complexity predominate over residues 915–929 (QQLSSSSSSSQAEAS). Residues 941–952 (PPKPSSSSAPPP) show a composition bias toward pro residues. 2 stretches are compositionally biased toward low complexity: residues 969–989 (QQEQ…SELA) and 1037–1049 (QKPT…STSS). Basic and acidic residues-rich tracts occupy residues 1052–1070 (PPKK…EKLI), 1080–1148 (VVDD…EKEP), and 1155–1180 (EKKD…KEYS). Residues 1098-1135 (DRDRDEDREKVRDKEDKAQREKDKKEKERERRRQRDRD) are a coiled coil. Positions 1181 to 1193 (KASTTSLIPTLSL) are enriched in polar residues. Basic and acidic residues predominate over residues 1199–1215 (PKKDTVEEEKKDVKEEA). The span at 1242–1252 (APVAPAVQQQQ) shows a compositional bias: low complexity. A compositionally biased stretch (pro residues) spans 1281 to 1291 (PLQPPPPPQMT). The segment covering 1308–1317 (PGSSRPSGNR) has biased composition (polar residues). Pro residues-rich tracts occupy residues 1320 to 1334 (PLPP…PPPD) and 1425 to 1440 (PPAP…PKDP).

It belongs to the Mediator complex subunit 1 family. As to quaternary structure, component of the Mediator complex.

Its subcellular location is the nucleus. Its function is as follows. Component of the Mediator complex, a coactivator involved in the regulated transcription of nearly all RNA polymerase II-dependent genes. Mediator functions as a bridge to convey information from gene-specific regulatory proteins to the basal RNA polymerase II transcription machinery. Mediator is recruited to promoters by direct interactions with regulatory proteins and serves as a scaffold for the assembly of a functional preinitiation complex with RNA polymerase II and the general transcription factors. This Caenorhabditis elegans protein is Mediator of RNA polymerase II transcription subunit 1.1 (sop-3).